Reading from the N-terminus, the 349-residue chain is Methylthioribose-1-phosphate isomerase (349 aa).

Substrate contacts are provided by residues 51–53 (RGA), arginine 94, and glutamine 199. The Proton donor role is filled by aspartate 240. 250–251 (NK) is a binding site for substrate.

Belongs to the eIF-2B alpha/beta/delta subunits family. MtnA subfamily. In terms of assembly, homodimer.

It catalyses the reaction 5-(methylsulfanyl)-alpha-D-ribose 1-phosphate = 5-(methylsulfanyl)-D-ribulose 1-phosphate. The protein operates within amino-acid biosynthesis; L-methionine biosynthesis via salvage pathway; L-methionine from S-methyl-5-thio-alpha-D-ribose 1-phosphate: step 1/6. Its function is as follows. Catalyzes the interconversion of methylthioribose-1-phosphate (MTR-1-P) into methylthioribulose-1-phosphate (MTRu-1-P). The chain is Methylthioribose-1-phosphate isomerase from Bacillus cytotoxicus (strain DSM 22905 / CIP 110041 / 391-98 / NVH 391-98).